A 442-amino-acid polypeptide reads, in one-letter code: MGICFSAEDQHYQFSQQQNYPKKTTPGKKAAVYLMKSDCEDVVGKVSGSGSGGGGLPLAPKNIKDLQSNPGYENVDIFTYEEMKIATKQFRPDYILGEGGFGVVYKGVIDESVRVGFKSTKVAIKELNPEGFQGDREWLAEVNYLGQLSHPNLVKLIGYCCEDDHRLLVYEYMAMGSLEKHLFRRVGCTLTWTKRMKIALDAAKGLAFLHGAERSIIYRDLKTANILLDEGYNAKLSDFGLAKDGPRGDQTHVSTRVMGTYGYAAPEYVMTGHLTSRSDVYGFGVLLLEMLLGKRAMDKSRACREHNLVEWARPLLNHNKKLLRIIDPRMDGQYGTKALMKVAGLAYQCLSQNPKGRPLMNHVVEVLETLKDDGDAQEEVMTNLHSRGKSVTLYEASSDSQGTRDGNGQRRRRPESGRSKSEAAVDTEKYVSTLSEPDTTKI.

The N-myristoyl glycine moiety is linked to residue glycine 2. Residue cysteine 4 is the site of S-palmitoyl cysteine attachment. Threonine 79 carries the phosphothreonine modification. The Protein kinase domain occupies phenylalanine 90–leucine 370. Residues leucine 96 to valine 104 and lysine 125 each bind ATP. Tyrosine 170 bears the Phosphotyrosine mark. Aspartate 220 serves as the catalytic Proton acceptor. Serine 254 is modified (phosphoserine). Residues threonine 255 and threonine 260 each carry the phosphothreonine modification. Tyrosine 268 is subject to Phosphotyrosine. The interval histidine 385–isoleucine 442 is disordered. The span at glutamate 395 to glycine 406 shows a compositional bias: polar residues. Residues proline 414–lysine 429 show a composition bias toward basic and acidic residues. Residues tyrosine 430–isoleucine 442 show a composition bias toward polar residues.

It belongs to the protein kinase superfamily. Ser/Thr protein kinase family.

The protein localises to the cell membrane. It carries out the reaction L-seryl-[protein] + ATP = O-phospho-L-seryl-[protein] + ADP + H(+). The enzyme catalyses L-threonyl-[protein] + ATP = O-phospho-L-threonyl-[protein] + ADP + H(+). Its function is as follows. May be involved in plant defense signaling. The protein is Probable serine/threonine-protein kinase PBL17 of Arabidopsis thaliana (Mouse-ear cress).